The primary structure comprises 495 residues: Tripartite motif-containing protein 5 (495 aa).

An N-acetylalanine modification is found at Ala-2. The RING-type zinc finger occupies 15–60 (CPICLELLTEPLSLHCGHSFCQACITANHKKSMLYKEGERSCPVCR). Phosphoserine is present on Ser-87. The B box-type zinc finger occupies 92 to 133 (QKVDHCARHGEKLLLFCQEDSKVICWLCERSQEHRGHHTFLM). Cys-97, His-100, Cys-119, and His-125 together coordinate Zn(2+). The stretch at 137 to 223 (AQEYHVKLQT…KSLTKSETKM (87 aa)) forms a coiled coil. The segment at 187–200 (FEQLREILDREESN) is required for interaction with GABARAP and for autophagy. The 213-residue stretch at 283 to 495 (LKGMLDMFRE…VPMTLCSPSS (213 aa)) folds into the B30.2/SPRY domain.

Belongs to the TRIM/RBCC family. Can form homodimers and homotrimers. In addition to lower-order dimerization, also exhibits a higher-order multimerization and both low- and high-order multimerizations are essential for its restriction activity. Interacts with BTBD1 and BTBD2. Interacts with PSMC4, PSMC5, PSMD7 and HSPA8/HSC70. Interacts (via B30.2/SPRY domain) with HSPA1A/B. Interacts with PSMC2, MAP3K7/TAK1, TAB2 and TAB3. Interacts with SQSTM1. Interacts with TRIM6 and TRIM34. Interacts with ULK1 (phosphorylated form), GABARAP, GABARAPL1, GABARAPL2, MAP1LC3A, MAP1LC3C and BECN1. Post-translationally, degraded in a proteasome-independent fashion in the absence of viral infection but in a proteasome-dependent fashion following exposure to restriction sensitive virus. In terms of processing, autoubiquitinated in a RING finger- and UBE2D2-dependent manner. Monoubiquitinated by TRIM21. Deubiquitinated by Yersinia YopJ. Ubiquitination may not lead to proteasomal degradation.

The protein localises to the cytoplasm. The protein resides in the nucleus. It carries out the reaction S-ubiquitinyl-[E2 ubiquitin-conjugating enzyme]-L-cysteine + [acceptor protein]-L-lysine = [E2 ubiquitin-conjugating enzyme]-L-cysteine + N(6)-ubiquitinyl-[acceptor protein]-L-lysine.. The protein operates within protein modification; protein ubiquitination. Functionally, capsid-specific restriction factor that prevents infection from non-host-adapted retroviruses. Blocks viral replication early in the life cycle, after viral entry but before reverse transcription. In addition to acting as a capsid-specific restriction factor, also acts as a pattern recognition receptor that activates innate immune signaling in response to the retroviral capsid lattice. Binding to the viral capsid triggers its E3 ubiquitin ligase activity, and in concert with the heterodimeric ubiquitin conjugating enzyme complex UBE2V1-UBE2N (also known as UBC13-UEV1A complex) generates 'Lys-63'-linked polyubiquitin chains, which in turn are catalysts in the autophosphorylation of the MAP3K7/TAK1 complex (includes TAK1, TAB2, and TAB3). Activation of the MAP3K7/TAK1 complex by autophosphorylation results in the induction and expression of NF-kappa-B and MAPK-responsive inflammatory genes, thereby leading to an innate immune response in the infected cell. Plays a role in regulating autophagy through activation of autophagy regulator BECN1 by causing its dissociation from its inhibitors BCL2 and TAB2. The protein is Tripartite motif-containing protein 5 (TRIM5) of Macaca nemestrina (Pig-tailed macaque).